Consider the following 524-residue polypeptide: MIKQALLSVSDKTGIVEFARELNALGVTLLSTGGTAKLLADSGLPVTEVADYTGFPEMLDGRVKTLHPKVHGGILARRDLPEHMAALAEHDIPTIDLLVVNLYPFQQTVAKDDCTLPDAIENIDIGGPTMLRSAAKNHRDVTVIVDPADYAVVLGEMRANGNSVGYDTNFRLATKVFAHTAQYDGAITNYLTSLGADKSHQARSAYPQTLNLAFDKVQEMRYGENPHQSAAFYRDLKAVDGALANYVQLQGKELSYNNIADADAAWECVKSFDAAAAAACVIIKHANPCGVALGANALEAYDKAFKTDSTSAFGGIIAFNVELDEAAAQAVAKQFVEVLIAPSFSAAARAVFAAKQNVRLLEIPLGKGINQYDFKRVGGGLLVQSPDAKNVQPSELRVVTRRHPTPKEMDDLMFAWRVAKFVKSNAIVFCGGGMTLGVGAGQMSRVDSARIASIKAQNAGLTLAGSAVASDAFFPFRDGLDVVVDAGATCVIQPGGSVRDDEVIAAADEHGIAMVLTGTRHFRH.

An MGS-like domain is found at 1 to 145 (MIKQALLSVS…KNHRDVTVIV (145 aa)).

It belongs to the PurH family.

It carries out the reaction (6R)-10-formyltetrahydrofolate + 5-amino-1-(5-phospho-beta-D-ribosyl)imidazole-4-carboxamide = 5-formamido-1-(5-phospho-D-ribosyl)imidazole-4-carboxamide + (6S)-5,6,7,8-tetrahydrofolate. The enzyme catalyses IMP + H2O = 5-formamido-1-(5-phospho-D-ribosyl)imidazole-4-carboxamide. It functions in the pathway purine metabolism; IMP biosynthesis via de novo pathway; 5-formamido-1-(5-phospho-D-ribosyl)imidazole-4-carboxamide from 5-amino-1-(5-phospho-D-ribosyl)imidazole-4-carboxamide (10-formyl THF route): step 1/1. Its pathway is purine metabolism; IMP biosynthesis via de novo pathway; IMP from 5-formamido-1-(5-phospho-D-ribosyl)imidazole-4-carboxamide: step 1/1. In Cupriavidus taiwanensis (strain DSM 17343 / BCRC 17206 / CCUG 44338 / CIP 107171 / LMG 19424 / R1) (Ralstonia taiwanensis (strain LMG 19424)), this protein is Bifunctional purine biosynthesis protein PurH.